The sequence spans 453 residues: Probable exopolygalacturonase B (453 aa).

An N-terminal signal peptide occupies residues 1–16 (MKFFALAALFASTVNS). Residues Asn-185 and Asn-225 are each glycosylated (N-linked (GlcNAc...) asparagine). Asp-255 serves as the catalytic Proton donor. Cys-257 and Cys-274 are oxidised to a cystine. 2 N-linked (GlcNAc...) asparagine glycosylation sites follow: Asn-263 and Asn-275. Residue His-278 is part of the active site. PbH1 repeat units lie at residues 295–316 (IENV…RLKA) and 327–348 (INNV…VLDQ). Asn-302, Asn-329, Asn-354, and Asn-366 each carry an N-linked (GlcNAc...) asparagine glycan. One copy of the PbH1 3 repeat lies at 362 to 405 (PSRVNFTNIVFEDIYGTSSGKRGKVVADLTCSPNAVCSGIRLKN). Residues Cys-392 and Cys-398 are joined by a disulfide bond. N-linked (GlcNAc...) asparagine glycosylation is present at Asn-436.

Belongs to the glycosyl hydrolase 28 family.

Its subcellular location is the secreted. The catalysed reaction is [(1-&gt;4)-alpha-D-galacturonosyl](n) + H2O = alpha-D-galacturonate + [(1-&gt;4)-alpha-D-galacturonosyl](n-1). Specific in hydrolyzing the terminal glycosidic bond of polygalacturonic acid and oligogalacturonates. The sequence is that of Probable exopolygalacturonase B (pgxB) from Aspergillus fumigatus (strain ATCC MYA-4609 / CBS 101355 / FGSC A1100 / Af293) (Neosartorya fumigata).